A 201-amino-acid chain; its full sequence is Recombination protein RecR (201 aa).

A C4-type zinc finger spans residues 60–75 (CKTCGNIDTQNPCTVC). In terms of domain architecture, Toprim spans 83 to 178 (AIIVVVADVA…KVTRLAHGVP (96 aa)).

The protein belongs to the RecR family.

Functionally, may play a role in DNA repair. It seems to be involved in an RecBC-independent recombinational process of DNA repair. It may act with RecF and RecO. In Rhodopseudomonas palustris (strain BisA53), this protein is Recombination protein RecR.